The chain runs to 217 residues: Probable disulfide bond formation protein D (217 aa).

A signal peptide spans 1-28 (MKSSNKLMALGIVFSIAVLIVIGTIVYS). The cysteines at positions 66 and 69 are disulfide-linked.

The protein belongs to the thioredoxin family. DsbA subfamily.

May be required for disulfide bond formation in some proteins. The chain is Probable disulfide bond formation protein D (bdbD) from Bacillus anthracis.